We begin with the raw amino-acid sequence, 189 residues long: Crossover junction endodeoxyribonuclease RuvC (189 aa).

Active-site residues include D7, E68, and D141. D7, E68, and D141 together coordinate Mg(2+).

It belongs to the RuvC family. Homodimer which binds Holliday junction (HJ) DNA. The HJ becomes 2-fold symmetrical on binding to RuvC with unstacked arms; it has a different conformation from HJ DNA in complex with RuvA. In the full resolvosome a probable DNA-RuvA(4)-RuvB(12)-RuvC(2) complex forms which resolves the HJ. The cofactor is Mg(2+).

It is found in the cytoplasm. It catalyses the reaction Endonucleolytic cleavage at a junction such as a reciprocal single-stranded crossover between two homologous DNA duplexes (Holliday junction).. The RuvA-RuvB-RuvC complex processes Holliday junction (HJ) DNA during genetic recombination and DNA repair. Endonuclease that resolves HJ intermediates. Cleaves cruciform DNA by making single-stranded nicks across the HJ at symmetrical positions within the homologous arms, yielding a 5'-phosphate and a 3'-hydroxyl group; requires a central core of homology in the junction. The consensus cleavage sequence is 5'-(A/T)TT(C/G)-3'. Cleavage occurs on the 3'-side of the TT dinucleotide at the point of strand exchange. HJ branch migration catalyzed by RuvA-RuvB allows RuvC to scan DNA until it finds its consensus sequence, where it cleaves and resolves the cruciform DNA. The sequence is that of Crossover junction endodeoxyribonuclease RuvC from Rhodococcus opacus (strain B4).